We begin with the raw amino-acid sequence, 121 residues long: MGSIASPSLSSSSQLLTITVEFTGGLESIFNNTRKHTLSIPATYPSPSTGEPEPTSVASLVHYLIENVMEDTRQELFVVDGAVRPGILVLINDADWELEGEEKYQIQQGDNILFVSTLHGG.

A 1-thioglycine modification is found at glycine 121. Residue glycine 121 forms a Glycyl lysine isopeptide (Gly-Lys) (interchain with K-? in acceptor proteins) linkage.

The protein belongs to the URM1 family. Post-translationally, C-terminal thiocarboxylation occurs in 2 steps, it is first acyl-adenylated (-COAMP) via the hesA/moeB/thiF part of UBA4, then thiocarboxylated (-COSH) via the rhodanese domain of UBA4.

The protein localises to the cytoplasm. It functions in the pathway tRNA modification; 5-methoxycarbonylmethyl-2-thiouridine-tRNA biosynthesis. Its function is as follows. Acts as a sulfur carrier required for 2-thiolation of mcm(5)S(2)U at tRNA wobble positions of cytosolic tRNA(Lys), tRNA(Glu) and tRNA(Gln). Serves as sulfur donor in tRNA 2-thiolation reaction by being thiocarboxylated (-COSH) at its C-terminus by the MOCS3 homolog UBA4. The sulfur is then transferred to tRNA to form 2-thiolation of mcm(5)S(2)U. Prior mcm(5) tRNA modification by the elongator complex is required for 2-thiolation. Also acts as a ubiquitin-like protein (UBL) that is covalently conjugated via an isopeptide bond to lysine residues of target proteins such as AHP1. The thiocarboxylated form serves as substrate for conjugation and oxidative stress specifically induces the formation of UBL-protein conjugates. This chain is Ubiquitin-related modifier 1, found in Ajellomyces capsulatus (strain NAm1 / WU24) (Darling's disease fungus).